Consider the following 252-residue polypeptide: Probable transcriptional regulator SauR (252 aa).

The HTH iclR-type domain occupies 6-68 (NAAAVRAFRI…AGNRHYECSS (63 aa)). The H-T-H motif DNA-binding region spans 28–47 (LAAIVQAIELPKQTVHRILK). The IclR-ED domain occupies 83-252 (PAAARHAILQ…ADEMVKTFCE (170 aa)).

Functionally, may regulate transcription of the sauSTU operon. This is Probable transcriptional regulator SauR (sauR) from Cupriavidus necator (strain ATCC 17699 / DSM 428 / KCTC 22496 / NCIMB 10442 / H16 / Stanier 337) (Ralstonia eutropha).